The following is a 246-amino-acid chain: Glandular kallikrein (246 aa).

Positions 1–7 (APPIQSR) are excised as a propeptide. A Peptidase S1 domain is found at 8–243 (IIGGRECEKN…YLDWINDTIT (236 aa)). 5 disulfides stabilise this stretch: Cys14-Cys158, Cys33-Cys49, Cys135-Cys204, Cys169-Cys183, and Cys194-Cys219. Residue His48 is the Charge relay system of the active site. A glycan (N-linked (GlcNAc...) asparagine) is linked at Asn85. The kallikrein (autolysis) loop stretch occupies residues 85 to 104 (NLSLLKXHTKADGKDYSHDL). Asp103 functions as the Charge relay system in the catalytic mechanism. The active-site Charge relay system is Ser198. Asn239 carries N-linked (GlcNAc...) asparagine glycosylation.

This sequence belongs to the peptidase S1 family. Kallikrein subfamily. In terms of assembly, monomer.

It catalyses the reaction Preferential cleavage of Arg-|-Xaa bonds in small molecule substrates. Highly selective action to release kallidin (lysyl-bradykinin) from kininogen involves hydrolysis of Met-|-Xaa or Leu-|-Xaa.. Functionally, glandular kallikreins cleave Met-Lys and Arg-Ser bonds in kininogen to release Lys-bradykinin. This is Glandular kallikrein from Sus scrofa (Pig).